The primary structure comprises 513 residues: Microcin J25-processing protein McjC (513 aa).

Positions 176–436 (STIDSIIDNI…FGSDIFWKKT (261 aa)) constitute an Asparagine synthetase domain.

It localises to the cytoplasm. In terms of biological role, along with McjB, necessary and sufficient to process the inactive microcin J25 (McjA) precursor into the active peptide. May be involved in the formation of the amide bond between Gly-38 and Glu-53 of McjA. The sequence is that of Microcin J25-processing protein McjC (mcjC) from Escherichia coli.